Consider the following 954-residue polypeptide: MAEVSAYKDTLNLLQTPFNMRANAPVREPEIQQFWADRQIYETLSRQNPGAPFVLHDGPPYANGALHMGHALNKTLKDIINKYQLLQGRKVRYVPGWDCHGLPIELKVLQELSSEERRNLTPLTLRQKAKAYALAQVEQQSQSFQRYGVWADWDAPYLTLTPEYEAAQIDVFGQMVLKGYIYRGLKPVHWSPSSRTALAEAELEYPDGHTSRSIYVAMPIVQLSEAAQPLLGNYANLALAIWTTTPWTIPANLAVAVNGELTYAVVQAGDCHLIVAAELAESLSKTFATELTVLATFPGSVLEHSRYRHPLYDRESPVVIGGDYITTESGTGLVHTAPGHGQDDFIVGNRYGLEVFCPVDDKGDFTAAVGDRLVGKNVLKDANAAVIEWLTEVGALLKEESYAHRYPYDWRTKKPTIFRATEQWFASVEGFREQALQAIAEVDWIPAQGENRITSMVSERSDWCISRQRTWGVPIPVFYDEESGEALLNAETIAHVRAIVAERGSDAWWELDVADLLPEPYRSNGRRYRKGTDTMDVWFDSGSSWAAVASQREGLHYPADLYLEGSDQHRGWFQSSLLTSVACNGHAPYRRVLTHGFALDEKGRKMSKSLGNVVDPAIVINGGKDQKQEPPYGADVLRLWVSSVDYSSDVPIGKNILKQMADVYRKIRNTARFLLGNLHDFDPAKDALPWEKLPELDRYLLHRLREVILEIQDAFESFQFFRFFQTVQNFCVVDLSNFYLDIGKDRLYISAPDSLRRRSCQTVLAICVEALATAIAPVLSHMAEDIWQSLPYPARTKSVFQAGWVQLQDDWNQPELAAKWQQLRDLRSEVNKVLEQARRDQAIGSSLEAKLQLWVADSDWRAALADRNPADSLSGTAVDDLRYLFLVSQVELRDQPTGLTEAKYHAQTEDWAIAVVDAEGQKCDRCWNYSTTVGQSSEHPDLCDRCVSALQGTF.

The 'HIGH' region motif lies at 60-70 (PYANGALHMGH). Glu564 contacts L-isoleucyl-5'-AMP. The 'KMSKS' region signature appears at 605 to 609 (KMSKS). Lys608 lines the ATP pocket. Zn(2+) contacts are provided by Cys923, Cys926, Cys943, and Cys946.

Belongs to the class-I aminoacyl-tRNA synthetase family. IleS type 1 subfamily. As to quaternary structure, monomer. It depends on Zn(2+) as a cofactor.

Its subcellular location is the cytoplasm. It catalyses the reaction tRNA(Ile) + L-isoleucine + ATP = L-isoleucyl-tRNA(Ile) + AMP + diphosphate. Its function is as follows. Catalyzes the attachment of isoleucine to tRNA(Ile). As IleRS can inadvertently accommodate and process structurally similar amino acids such as valine, to avoid such errors it has two additional distinct tRNA(Ile)-dependent editing activities. One activity is designated as 'pretransfer' editing and involves the hydrolysis of activated Val-AMP. The other activity is designated 'posttransfer' editing and involves deacylation of mischarged Val-tRNA(Ile). The chain is Isoleucine--tRNA ligase from Synechococcus sp. (strain ATCC 27144 / PCC 6301 / SAUG 1402/1) (Anacystis nidulans).